Reading from the N-terminus, the 628-residue chain is Very-long-chain aldehyde decarbonylase GL1-2 (628 aa).

Helical transmembrane passes span 37 to 57 (GAAP…ARGL), 131 to 151 (GWAI…YWAH), 191 to 211 (VVIG…VGLV), 299 to 319 (DFVF…PFVL), and 331 to 351 (FVLL…WCCS). One can recognise a Fatty acid hydroxylase domain in the interval 137-277 (LLHVLVAEPL…MPIFDLLGGT (141 aa)).

Belongs to the sterol desaturase family. As to quaternary structure, homodimer. Expressed in germinating seeds, radicals and leaves.

The protein localises to the endoplasmic reticulum membrane. It carries out the reaction a long-chain fatty aldehyde + 2 NADPH + O2 + H(+) = a long-chain alkane + formate + 2 NADP(+) + H2O. Functionally, aldehyde decarbonylase involved in the conversion of aldehydes to alkanes. Core component of a very-long-chain alkane synthesis complex. Required for the formation of wax layers conferring cuticular permeability and drought tolerance. This Oryza sativa subsp. japonica (Rice) protein is Very-long-chain aldehyde decarbonylase GL1-2.